The primary structure comprises 396 residues: L-lactate dehydrogenase (396 aa).

Residues 1–380 (MIISAASDYR…TQDSLVQGLG (380 aa)) enclose the FMN hydroxy acid dehydrogenase domain. A substrate-binding site is contributed by Tyr24. Residues Ser106 and Gln127 each contribute to the FMN site. Tyr129 provides a ligand contact to substrate. Thr155 lines the FMN pocket. Position 164 (Arg164) interacts with substrate. Lys251 contacts FMN. The active-site Proton acceptor is the His275. Arg278 is a binding site for substrate. 306 to 330 (DSGIRNGLDVVRMIALGADTVLLGR) is a binding site for FMN.

This sequence belongs to the FMN-dependent alpha-hydroxy acid dehydrogenase family. FMN is required as a cofactor.

It localises to the cell inner membrane. It carries out the reaction (S)-lactate + A = pyruvate + AH2. In terms of biological role, catalyzes the conversion of L-lactate to pyruvate. Is coupled to the respiratory chain. In Shigella boydii serotype 4 (strain Sb227), this protein is L-lactate dehydrogenase.